The sequence spans 206 residues: Protein GET1 (206 aa).

At 1 to 4 (MPSL) the chain is on the lumenal side. Residues 5–24 (LITALFLNVIIYVINTVGAA) traverse the membrane as a helical segment. Topologically, residues 25–110 (TVDGLLWLLY…TFDITIKIAR (86 aa)) are cytoplasmic. Positions 75-100 (AKLRRRHDKALEAYEAKNNELTQSKS) form a coiled coil. A helical membrane pass occupies residues 111 to 131 (WAATSGLMLFLQFWYSKTPIF). Over 132–155 (TLPPGWIPWQVQWVLSFPRAPMGT) the chain is Lumenal. The helical transmembrane segment at 156-172 (VSIQIWSGACATVVALV) threads the bilayer. Over 173 to 206 (GDAMKASLAYVSKPKIDRIKLGATMEGKEGKKRQ) the chain is Cytoplasmic.

This sequence belongs to the WRB/GET1 family. In terms of assembly, interacts with GET3.

The protein localises to the endoplasmic reticulum membrane. Functionally, required for the post-translational delivery of tail-anchored (TA) proteins to the endoplasmic reticulum. Acts as a membrane receptor for soluble GET3, which recognizes and selectively binds the transmembrane domain of TA proteins in the cytosol. The polypeptide is Protein GET1 (Ajellomyces capsulatus (strain H143) (Darling's disease fungus)).